Reading from the N-terminus, the 218-residue chain is uncharacterized protein (218 aa).

An RING-type zinc finger spans residues cysteine 154–arginine 199.

This is an uncharacterized protein from Caenorhabditis elegans.